The chain runs to 596 residues: DNA polymerase kappa (596 aa).

In terms of domain architecture, UmuC spans Cys-85–Gly-320. Residues Asp-89 and Asp-180 each contribute to the Mg(2+) site. Residue Glu-181 is part of the active site. The UBZ4-type zinc finger occupies Thr-516–Gln-545. Positions 519, 522, 536, and 540 each coordinate Zn(2+). The disordered stretch occupies residues Asn-559–Lys-584. Basic residues predominate over residues Thr-570–Lys-584.

The protein belongs to the DNA polymerase type-Y family. Requires Mg(2+) as cofactor. Mn(2+) is required as a cofactor.

The protein resides in the nucleus. It catalyses the reaction DNA(n) + a 2'-deoxyribonucleoside 5'-triphosphate = DNA(n+1) + diphosphate. In terms of biological role, DNA polymerase specifically involved in DNA repair. Plays an important role in translesion synthesis, where the normal high-fidelity DNA polymerases cannot proceed and DNA synthesis stalls. Depending on the context, it inserts the correct base, but causes frequent base transitions, transversions and frameshifts. Lacks 3'-5' proofreading exonuclease activity. Forms a Schiff base with 5'-deoxyribose phosphate at abasic sites, but does not have lyase activity. The protein is DNA polymerase kappa (polk-1) of Caenorhabditis elegans.